We begin with the raw amino-acid sequence, 323 residues long: tRNA U34 carboxymethyltransferase (323 aa).

Carboxy-S-adenosyl-L-methionine contacts are provided by residues K91, W105, K110, G130, 152–154, 181–182, M196, Y200, and R315; these read DPT and IE.

It belongs to the class I-like SAM-binding methyltransferase superfamily. CmoB family. Homotetramer.

The catalysed reaction is carboxy-S-adenosyl-L-methionine + 5-hydroxyuridine(34) in tRNA = 5-carboxymethoxyuridine(34) in tRNA + S-adenosyl-L-homocysteine + H(+). Its function is as follows. Catalyzes carboxymethyl transfer from carboxy-S-adenosyl-L-methionine (Cx-SAM) to 5-hydroxyuridine (ho5U) to form 5-carboxymethoxyuridine (cmo5U) at position 34 in tRNAs. The sequence is that of tRNA U34 carboxymethyltransferase from Salmonella typhi.